Reading from the N-terminus, the 1019-residue chain is TOG array regulator of axonemal microtubules protein 2 (1019 aa).

Disordered stretches follow at residues 28–54 (AGPR…PEPR), 131–158 (RRLS…PLHS), 249–311 (TPSR…AKKP), and 991–1019 (SLGG…FQLD). The span at 1007-1019 (SKTTGSSYPFQLD) shows a compositional bias: polar residues.

It belongs to the Crescerin family.

The chain is TOG array regulator of axonemal microtubules protein 2 from Homo sapiens (Human).